The primary structure comprises 293 residues: Diaminopimelate epimerase (293 aa).

Positions 15, 47, and 67 each coordinate substrate. Cys76 functions as the Proton donor in the catalytic mechanism. Substrate-binding positions include 77 to 78 (GN), Asn163, Asn197, and 215 to 216 (ER). Cys224 functions as the Proton acceptor in the catalytic mechanism. Residue 225–226 (GS) participates in substrate binding.

The protein belongs to the diaminopimelate epimerase family. In terms of assembly, homodimer.

The protein localises to the cytoplasm. It catalyses the reaction (2S,6S)-2,6-diaminopimelate = meso-2,6-diaminopimelate. It participates in amino-acid biosynthesis; L-lysine biosynthesis via DAP pathway; DL-2,6-diaminopimelate from LL-2,6-diaminopimelate: step 1/1. In terms of biological role, catalyzes the stereoinversion of LL-2,6-diaminopimelate (L,L-DAP) to meso-diaminopimelate (meso-DAP), a precursor of L-lysine and an essential component of the bacterial peptidoglycan. This is Diaminopimelate epimerase from Chelativorans sp. (strain BNC1).